The sequence spans 338 residues: Cap-specific mRNA (nucleoside-2'-O-)-methyltransferase (338 aa).

Residue tyrosine 22 participates in mRNA binding. S-adenosyl-L-methionine is bound by residues glutamine 39, tyrosine 66, glycine 68, glycine 72, aspartate 95, arginine 97, valine 116, and aspartate 138. Positions proline 169–isoleucine 249 are binding to NPH-I. The segment at proline 169–lysine 333 is binding to Rap94. Catalysis depends on lysine 175, which acts as the For methyltransferase activity. MRNA is bound by residues arginine 177 to phenylalanine 180, aspartate 182, serine 205 to glutamate 207, and glutamate 233. The tract at residues histidine 305–threonine 338 is disordered. The span at arginine 323–threonine 338 shows a compositional bias: basic residues.

The protein belongs to the class I-like SAM-binding methyltransferase superfamily. Poxvirus/kinetoplastid 2'-O-MTase family. As to quaternary structure, interacts with poly(A) polymerase catalytic subunit OPG063. Interacts with OPG109 and OPG123; these interactions might help linking transcription to capping and polyadenylation.

The protein localises to the virion. It catalyses the reaction a 5'-end (N(7)-methyl 5'-triphosphoguanosine)-ribonucleoside in mRNA + S-adenosyl-L-methionine = a 5'-end (N(7)-methyl 5'-triphosphoguanosine)-(2'-O-methyl-ribonucleoside) in mRNA + S-adenosyl-L-homocysteine + H(+). In terms of biological role, displays methyltransferase, positive regulation of the poly(A) polymerase and transcription elongation activities. Involved in the modification of both mRNA ends and in intermediate and late gene positive transcription elongation. At the mRNAs 5' end, methylates the ribose 2' OH group of the first transcribed nucleotide, thereby producing a 2'-O-methylpurine cap. At the 3' end, functions as a processivity factor which stimulates the activity of the viral poly(A) polymerase OPG063 that creates mRNA's poly(A) tail. In the presence of OPG102, OPG063 does not dissociate from the RNA allowing tail elongation to around 250 adenylates. The protein is Cap-specific mRNA (nucleoside-2'-O-)-methyltransferase (OPG102) of Oryctolagus cuniculus (Rabbit).